A 94-amino-acid chain; its full sequence is Pyrimidine/purine nucleoside phosphorylase (94 aa).

The protein belongs to the nucleoside phosphorylase PpnP family.

The enzyme catalyses a purine D-ribonucleoside + phosphate = a purine nucleobase + alpha-D-ribose 1-phosphate. It catalyses the reaction adenosine + phosphate = alpha-D-ribose 1-phosphate + adenine. The catalysed reaction is cytidine + phosphate = cytosine + alpha-D-ribose 1-phosphate. It carries out the reaction guanosine + phosphate = alpha-D-ribose 1-phosphate + guanine. The enzyme catalyses inosine + phosphate = alpha-D-ribose 1-phosphate + hypoxanthine. It catalyses the reaction thymidine + phosphate = 2-deoxy-alpha-D-ribose 1-phosphate + thymine. The catalysed reaction is uridine + phosphate = alpha-D-ribose 1-phosphate + uracil. It carries out the reaction xanthosine + phosphate = alpha-D-ribose 1-phosphate + xanthine. Catalyzes the phosphorolysis of diverse nucleosides, yielding D-ribose 1-phosphate and the respective free bases. Can use uridine, adenosine, guanosine, cytidine, thymidine, inosine and xanthosine as substrates. Also catalyzes the reverse reactions. The chain is Pyrimidine/purine nucleoside phosphorylase from Pseudomonas fluorescens (strain Pf0-1).